A 322-amino-acid chain; its full sequence is Ribosomal RNA small subunit methyltransferase H (322 aa).

S-adenosyl-L-methionine contacts are provided by residues 42-44 (GGH), D62, F86, D107, and Q114.

Belongs to the methyltransferase superfamily. RsmH family.

The protein localises to the cytoplasm. The enzyme catalyses cytidine(1402) in 16S rRNA + S-adenosyl-L-methionine = N(4)-methylcytidine(1402) in 16S rRNA + S-adenosyl-L-homocysteine + H(+). Specifically methylates the N4 position of cytidine in position 1402 (C1402) of 16S rRNA. In Janthinobacterium sp. (strain Marseille) (Minibacterium massiliensis), this protein is Ribosomal RNA small subunit methyltransferase H.